The primary structure comprises 362 residues: Class I histocompatibility antigen, Gogo-B*0103 alpha chain (362 aa).

The N-terminal stretch at 1–24 (MRVTAPRTLLLLLSAALALTETWA) is a signal peptide. The interval 25-114 (GSHSMRYFDT…ALRYYNQSEA (90 aa)) is alpha-1. The Extracellular segment spans residues 25–308 (GSHSMRYFDT…EPSSQSTIPI (284 aa)). N110 carries an N-linked (GlcNAc...) asparagine glycan. The interval 115-206 (GSHTIQWMYG…ENGRETLQRA (92 aa)) is alpha-2. Cystine bridges form between C125–C188 and C227–C283. The interval 207 to 298 (DTPKTHVTHH…GLPKPLTLRW (92 aa)) is alpha-3. The Ig-like C1-type domain occupies 209–295 (PKTHVTHHPI…QHEGLPKPLT (87 aa)). The interval 299 to 308 (EPSSQSTIPI) is connecting peptide. A helical transmembrane segment spans residues 309–332 (VGIVAGLAVLAVVVIGAVVTAVIC). At 333-362 (RRKSSGGKGGSYSQAASSDSAQGSDVSLTA) the chain is on the cytoplasmic side. Residues 335–362 (KSSGGKGGSYSQAASSDSAQGSDVSLTA) are disordered. The span at 343–362 (SYSQAASSDSAQGSDVSLTA) shows a compositional bias: low complexity.

The protein belongs to the MHC class I family. Heterodimer of an alpha chain and a beta chain (beta-2-microglobulin).

It is found in the membrane. Functionally, involved in the presentation of foreign antigens to the immune system. The sequence is that of Class I histocompatibility antigen, Gogo-B*0103 alpha chain from Gorilla gorilla gorilla (Western lowland gorilla).